The chain runs to 360 residues: MPTILVSALEASSNVHLEELRHNLPKDYRFIGVFEGKNALYSPREFSVMGFRDVIGRLGFLLKAHKEMVQLAKQADMVLLMDSSSFNIPLAKKIKKQDPHKKIMYYILPQVWAWKKWRAKSLEKYCDFLGAILPFEVGYYQKKAQYVGHPLLDEIKYYKKDIKGETLVFMPGSRKSEIAKMFPLFVKAAQILEQNEGFKRRVLVVPSFFKGLDLKALYGEDIKLFEISYDAHKSLFEAEFAFICSGTATLEAALIGTPFVLAYRAKTMDFLIARMLVNLHYIGLANIFYNALNNETPGLGESQLHPELIQHFLSVEGLLKAYEEMDRERYFKESLRLREYLASGSTRKIANEMAFLLNLT.

It belongs to the LpxB family.

It carries out the reaction a lipid X + a UDP-2-N,3-O-bis[(3R)-3-hydroxyacyl]-alpha-D-glucosamine = a lipid A disaccharide + UDP + H(+). It functions in the pathway bacterial outer membrane biogenesis; LPS lipid A biosynthesis. Its function is as follows. Condensation of UDP-2,3-diacylglucosamine and 2,3-diacylglucosamine-1-phosphate to form lipid A disaccharide, a precursor of lipid A, a phosphorylated glycolipid that anchors the lipopolysaccharide to the outer membrane of the cell. This Helicobacter pylori (strain P12) protein is Lipid-A-disaccharide synthase.